We begin with the raw amino-acid sequence, 192 residues long: Iodate reductase subunit IdrB (192 aa).

The segment at residues 1–52 (MSENIIPVRAVPAHDHEHDGERACMSRRRFLLFGGTSVALLSIASLPGVAQV) is a signal peptide (tat-type signal). Residues 102–173 (GADKDIVAFN…LEVQGDDIYA (72 aa)) form the Rieske domain. [2Fe-2S] cluster is bound by residues cysteine 114, histidine 116, cysteine 135, and histidine 138.

This sequence belongs to the AOX family. In terms of assembly, the iodate reductase (Idr) complex is composed of a molybdopterin-dependent iodate reductase (IdrA and IdrB subunits) and two associated peroxidases (IdrP1 and IdrP2). The cofactor is [2Fe-2S] cluster. Post-translationally, predicted to be exported by the Tat system. The position of the signal peptide cleavage has not been experimentally proven.

It localises to the periplasm. In terms of biological role, involved in iodate respiration. Probably catalyzes the reduction of iodate (IO(3)(-)) to hypoiodous acid (HIO) and H(2)O(2), using a reduced cytochrome c as the electron donor. This is Iodate reductase subunit IdrB from Pseudomonas sp. (strain SCT).